A 710-amino-acid polypeptide reads, in one-letter code: Lactoperoxidase (710 aa).

Positions 1 to 23 (MKVLLHLPALLASLTLLQTAASA) are cleaved as a signal peptide. Positions 24 to 80 (SDDPTAETDIIHDTVEEVKVWVNKAFLDSRDRLKMAMTTKIHSTRHLSDYLKHAKGR) are excised as a propeptide. The cysteines at positions 130 and 143 are disulfide-linked. Asp223 is a heme b binding site. The active-site Proton acceptor is His224. Asp225 is a binding site for Ca(2+). 2 cysteine pairs are disulfide-bonded: Cys244–Cys254 and Cys248–Cys272. Positions 299, 301, 303, and 305 each coordinate Ca(2+). The residue at position 313 (Ser313) is a Phosphoserine. Residues Cys352 and Cys363 are joined by a disulfide bond. Residues Glu373 and His466 each coordinate heme b. 3'-nitrotyrosine is present on Tyr480. 2 disulfides stabilise this stretch: Cys571–Cys628 and Cys669–Cys694.

It belongs to the peroxidase family. The cofactor is Ca(2+). It depends on heme b as a cofactor. As to expression, expressed in the colon, including colonocytes and mucin-containing goblet cells. Not detected in the ileum.

The protein localises to the secreted. Its subcellular location is the cytoplasm. The catalysed reaction is 2 a phenolic donor + H2O2 = 2 a phenolic radical donor + 2 H2O. The enzyme catalyses thiocyanate + H2O2 + H(+) = hypothiocyanous acid + H2O. It catalyses the reaction iodide + H2O2 = hypoiodite + H2O. In terms of biological role, heme-containing oxidoreductase which catalyzes the conversion of thiocyanate (SCN(-)) into antimicrobial agent hypothiocyanous acid (OSCN(-)) in the presence of hydrogen peroxide (H2O2). Also involved in the conversion of iodide (I(-)) into hypoiodite (IO(-)) in the presence of H2O2. Responsible for the inactivation of a wide range of micro-organisms and hence, important component of defense mechanism. May be implicated in airway host defense against infection. May contribute to maintaining an appropriate H2O2 cellular level, therefore protecting cells from H2O2-caused injuries and inflammation. The sequence is that of Lactoperoxidase from Mus musculus (Mouse).